Here is a 150-residue protein sequence, read N- to C-terminus: Transcriptional repressor NrdR (150 aa).

A zinc finger lies at 3 to 34; sequence CPFCAFADSKVVDSRPDKEGSTIRRRRECESC. The ATP-cone domain occupies 49–139; it reads PLVIKKDGRR…VYRSFKDITE (91 aa).

The protein belongs to the NrdR family. It depends on Zn(2+) as a cofactor.

Functionally, negatively regulates transcription of bacterial ribonucleotide reductase nrd genes and operons by binding to NrdR-boxes. This is Transcriptional repressor NrdR from Geotalea daltonii (strain DSM 22248 / JCM 15807 / FRC-32) (Geobacter daltonii).